The sequence spans 363 residues: Histone-lysine N-methyltransferase ASHH3 (363 aa).

In terms of domain architecture, AWS spans 63-114 (DDGIFCSCSSSSPGSSSTVCGSNCHCGMLFSSCSSSCKCGSECNNKPFQQRH). In terms of domain architecture, SET spans 116–233 (KKMKLIQTEK…KGEHLTYDYQ (118 aa)). Residues 239 to 255 (ADQDCHCGAVGCRRKLG) form the Post-SET domain.

This sequence belongs to the class V-like SAM-binding methyltransferase superfamily. Histone-lysine methyltransferase family. SET2 subfamily.

It localises to the nucleus. The protein localises to the chromosome. Its subcellular location is the centromere. The enzyme catalyses L-lysyl-[histone] + S-adenosyl-L-methionine = N(6)-methyl-L-lysyl-[histone] + S-adenosyl-L-homocysteine + H(+). Its function is as follows. Histone methyltransferase. The polypeptide is Histone-lysine N-methyltransferase ASHH3 (ASHH3) (Arabidopsis thaliana (Mouse-ear cress)).